The primary structure comprises 505 residues: ATP synthase subunit alpha (505 aa).

170–177 lines the ATP pocket; that stretch reads GDRQTGKT.

Belongs to the ATPase alpha/beta chains family. F-type ATPases have 2 components, CF(1) - the catalytic core - and CF(0) - the membrane proton channel. CF(1) has five subunits: alpha(3), beta(3), gamma(1), delta(1), epsilon(1). CF(0) has four main subunits: a, b, b' and c.

It localises to the cellular thylakoid membrane. The catalysed reaction is ATP + H2O + 4 H(+)(in) = ADP + phosphate + 5 H(+)(out). Its function is as follows. Produces ATP from ADP in the presence of a proton gradient across the membrane. The alpha chain is a regulatory subunit. In Cyanothece sp. (strain PCC 7425 / ATCC 29141), this protein is ATP synthase subunit alpha.